The primary structure comprises 402 residues: Serine/threonine transporter SstT (402 aa).

Helical transmembrane passes span 19–39 (IGVVIGLFLGILVPKASAIGL), 43–63 (LFVGGLKAIAPLLVFTLVISA), 86–106 (TFAAALIAVVVNYIFPLTLIL), 138–158 (AITEANYMSILFWAVIFGLAM), 179–199 (VVKWIINLAPIGIMGLVFTSI), 212–232 (LLILVLVGTMLFVALVVNPII), 287–307 (IPLGAAINMAGAAITINILTL), 327–347 (VVAAVSACGASGVTGGSLLLI), and 354–374 (FGISNDVAMQVVGVGFIVGVI).

This sequence belongs to the dicarboxylate/amino acid:cation symporter (DAACS) (TC 2.A.23) family.

It localises to the cell membrane. It carries out the reaction L-serine(in) + Na(+)(in) = L-serine(out) + Na(+)(out). The enzyme catalyses L-threonine(in) + Na(+)(in) = L-threonine(out) + Na(+)(out). In terms of biological role, involved in the import of serine and threonine into the cell, with the concomitant import of sodium (symport system). The sequence is that of Serine/threonine transporter SstT from Streptococcus agalactiae serotype Ia (strain ATCC 27591 / A909 / CDC SS700).